Consider the following 748-residue polypeptide: E3 ubiquitin-protein ligase DTX3L (748 aa).

Ala-2 carries the N-acetylalanine modification. Ser-9 is modified (phosphoserine). 3 disordered regions span residues 94–117 (DLRPRLPSLTQPVETPSSRPPSLT), 209–238 (EQKRKGSEQKRKCAPQKHTPPDVEREPPDQ), and 528–562 (QETPMEISSSDPHGDQQENAALPAPRGTSSSPAAS). Polar residues predominate over residues 101–117 (SLTQPVETPSSRPPSLT). 2 stretches are compositionally biased toward basic and acidic residues: residues 209–219 (EQKRKGSEQKR) and 227–236 (TPPDVEREPP). The residue at position 215 (Ser-215) is a Phosphoserine. Position 536 is a phosphoserine (Ser-536). The RING-type zinc-finger motif lies at 569–608 (CVICMDTISNKHVLPKCKHEFCTSCISKAMLIKPVCPVCL).

It belongs to the Deltex family. As to quaternary structure, homodimer and heterodimer. Can heterodimerize with DTX1, enhancing its ubiquitin ligase activity in vitro. Interacts (via N-terminus) with ADP ribosyltransferase PARP9/BAL1 (via PARP catalytic domain) forming a stable complex; the interaction is required to activate PARP9 but is dispensable for DTX3L catalytic activity. Forms a complex with STAT1 and PARP9 independently of IFNB1 or IFNG-mediated STAT1 'Tyr-701' phosphorylation. Found in a complex with PARP9, STAT1 and H2BC9. Found in a complex with E3 ligase ITCH and ESCRT-0 components HGS and STAM. Interacts (via C-terminus) with ITCH; the interaction is increased upon CXCL12 stimulation and inhibits ITCH catalytic activity; the interaction is direct. Interacts with HGS and STAM; the interaction brings together HGS and STAM and promotes their recruitment to early endosomes. Post-translationally, autoubiquitinated.

It is found in the cytoplasm. The protein localises to the nucleus. The protein resides in the early endosome membrane. It localises to the lysosome membrane. The enzyme catalyses S-ubiquitinyl-[E2 ubiquitin-conjugating enzyme]-L-cysteine + [acceptor protein]-L-lysine = [E2 ubiquitin-conjugating enzyme]-L-cysteine + N(6)-ubiquitinyl-[acceptor protein]-L-lysine.. It functions in the pathway protein modification; protein ubiquitination. Binding to PARP9 enhances DTX3L catalytic activity. In terms of biological role, E3 ubiquitin-protein ligase which, in association with ADP-ribosyltransferase PARP9, plays a role in DNA damage repair and in interferon-mediated antiviral responses. Monoubiquitinates several histones, including histone H2A, H2B, H3 and H4. In response to DNA damage, mediates monoubiquitination of 'Lys-91' of histone H4 (H4K91ub1). The exact role of H4K91ub1 in DNA damage response is still unclear but it may function as a licensing signal for additional histone H4 post-translational modifications such as H4 'Lys-20' methylation (H4K20me). PARP1-dependent PARP9-DTX3L-mediated ubiquitination promotes the rapid and specific recruitment of 53BP1/TP53BP1, UIMC1/RAP80, and BRCA1 to DNA damage sites. By monoubiquitinating histone H2B H2BC9/H2BJ and thereby promoting chromatin remodeling, positively regulates STAT1-dependent interferon-stimulated gene transcription and thus STAT1-mediated control of viral replication. Independently of its catalytic activity, promotes the sorting of chemokine receptor CXCR4 from early endosome to lysosome following CXCL12 stimulation by reducing E3 ligase ITCH activity and thus ITCH-mediated ubiquitination of endosomal sorting complex required for transport ESCRT-0 components HGS and STAM. In addition, required for the recruitment of HGS and STAM to early endosomes. The polypeptide is E3 ubiquitin-protein ligase DTX3L (Dtx3l) (Mus musculus (Mouse)).